The sequence spans 231 residues: Large ribosomal subunit protein uL1 (231 aa).

Belongs to the universal ribosomal protein uL1 family. Part of the 50S ribosomal subunit.

Its function is as follows. Binds directly to 23S rRNA. The L1 stalk is quite mobile in the ribosome, and is involved in E site tRNA release. Protein L1 is also a translational repressor protein, it controls the translation of the L11 operon by binding to its mRNA. The chain is Large ribosomal subunit protein uL1 from Teredinibacter turnerae (strain ATCC 39867 / T7901).